The sequence spans 364 residues: Chorismate synthase (364 aa).

The NADP(+) site is built by Arg48 and Arg54. Residues 125-127 (RSS), 238-239 (NA), Gly278, 293-297 (KPTSS), and Arg319 contribute to the FMN site.

The protein belongs to the chorismate synthase family. Homotetramer. It depends on FMNH2 as a cofactor.

It catalyses the reaction 5-O-(1-carboxyvinyl)-3-phosphoshikimate = chorismate + phosphate. It participates in metabolic intermediate biosynthesis; chorismate biosynthesis; chorismate from D-erythrose 4-phosphate and phosphoenolpyruvate: step 7/7. Its function is as follows. Catalyzes the anti-1,4-elimination of the C-3 phosphate and the C-6 proR hydrogen from 5-enolpyruvylshikimate-3-phosphate (EPSP) to yield chorismate, which is the branch point compound that serves as the starting substrate for the three terminal pathways of aromatic amino acid biosynthesis. This reaction introduces a second double bond into the aromatic ring system. This Marinobacter nauticus (strain ATCC 700491 / DSM 11845 / VT8) (Marinobacter aquaeolei) protein is Chorismate synthase.